A 69-amino-acid polypeptide reads, in one-letter code: Putative membrane protein insertion efficiency factor (69 aa).

This sequence belongs to the UPF0161 family.

The protein resides in the cell membrane. Its function is as follows. Could be involved in insertion of integral membrane proteins into the membrane. This Clostridium botulinum (strain 657 / Type Ba4) protein is Putative membrane protein insertion efficiency factor.